Reading from the N-terminus, the 337-residue chain is GTP 3',8-cyclase (337 aa).

Residues Pro-17–Lys-243 form the Radical SAM core domain. Residue Arg-26 participates in GTP binding. Residues Cys-33 and Cys-37 each coordinate [4Fe-4S] cluster. Tyr-39 provides a ligand contact to S-adenosyl-L-methionine. [4Fe-4S] cluster is bound at residue Cys-40. Arg-76 is a GTP binding site. Gly-80 is a binding site for S-adenosyl-L-methionine. A GTP-binding site is contributed by Thr-107. Position 131 (Ser-131) interacts with S-adenosyl-L-methionine. Lys-168 lines the GTP pocket. Met-202 is a binding site for S-adenosyl-L-methionine. [4Fe-4S] cluster contacts are provided by Cys-265 and Cys-268. Arg-270–Arg-272 is a binding site for GTP. Position 282 (Cys-282) interacts with [4Fe-4S] cluster.

This sequence belongs to the radical SAM superfamily. MoaA family. In terms of assembly, monomer and homodimer. Requires [4Fe-4S] cluster as cofactor.

The catalysed reaction is GTP + AH2 + S-adenosyl-L-methionine = (8S)-3',8-cyclo-7,8-dihydroguanosine 5'-triphosphate + 5'-deoxyadenosine + L-methionine + A + H(+). Its pathway is cofactor biosynthesis; molybdopterin biosynthesis. Catalyzes the cyclization of GTP to (8S)-3',8-cyclo-7,8-dihydroguanosine 5'-triphosphate. This Haemophilus influenzae (strain 86-028NP) protein is GTP 3',8-cyclase.